The chain runs to 51 residues: Non-specific lipid-transfer protein (51 aa).

This sequence belongs to the plant LTP family.

Functionally, plant non-specific lipid-transfer proteins transfer phospholipids as well as galactolipids across membranes. May play a role in wax or cutin deposition in the cell walls of expanding epidermal cells and certain secretory tissues. This is Non-specific lipid-transfer protein from Lycium barbarum (Barbary matrimony-vine).